Reading from the N-terminus, the 465-residue chain is Kynureninase (465 aa).

Pyridoxal 5'-phosphate-binding positions include L133, T134, 161-164 (FPSD), S217, D246, H249, and Y271. K272 bears the N6-(pyridoxal phosphate)lysine mark. W302 and N330 together coordinate pyridoxal 5'-phosphate.

It belongs to the kynureninase family. Homodimer. It depends on pyridoxal 5'-phosphate as a cofactor.

It is found in the cytoplasm. It carries out the reaction L-kynurenine + H2O = anthranilate + L-alanine + H(+). It catalyses the reaction 3-hydroxy-L-kynurenine + H2O = 3-hydroxyanthranilate + L-alanine + H(+). The protein operates within amino-acid degradation; L-kynurenine degradation; L-alanine and anthranilate from L-kynurenine: step 1/1. It functions in the pathway cofactor biosynthesis; NAD(+) biosynthesis; quinolinate from L-kynurenine: step 2/3. In terms of biological role, catalyzes the cleavage of L-kynurenine (L-Kyn) and L-3-hydroxykynurenine (L-3OHKyn) into anthranilic acid (AA) and 3-hydroxyanthranilic acid (3-OHAA), respectively. The protein is Kynureninase of Nematostella vectensis (Starlet sea anemone).